Here is a 451-residue protein sequence, read N- to C-terminus: UPF0210 protein Cbei_2352 (451 aa).

The protein belongs to the UPF0210 family. As to quaternary structure, homodimer.

In Clostridium beijerinckii (strain ATCC 51743 / NCIMB 8052) (Clostridium acetobutylicum), this protein is UPF0210 protein Cbei_2352.